Reading from the N-terminus, the 550-residue chain is M-phase inducer phosphatase 1-B (550 aa).

Disordered regions lie at residues 76-98 and 285-335; these read NLGD…GKVE and SPSM…QRRG. Residues 290–310 show a composition bias toward basic and acidic residues; it reads EKLDRPMLKRPVRPLDSETPV. A compositionally biased stretch (polar residues) spans 322–335; it reads LQPQEENFQPQRRG. A Rhodanese domain is found at 401–508; the sequence is LVEKIFIIDC…FFPEYKELCE (108 aa). C457 is a catalytic residue.

It belongs to the MPI phosphatase family.

The enzyme catalyses O-phospho-L-tyrosyl-[protein] + H2O = L-tyrosyl-[protein] + phosphate. Functionally, tyrosine protein phosphatase which functions as a dosage-dependent inducer of mitotic progression. Directly dephosphorylates CDK1 and stimulates its kinase activity. The chain is M-phase inducer phosphatase 1-B (cdc25-1-b) from Xenopus laevis (African clawed frog).